Reading from the N-terminus, the 549-residue chain is Chaperonin GroEL (549 aa).

Residues 30–33 (TLGP), Lys-51, 87–91 (DGTTT), Gly-415, 479–481 (NAA), and Asp-495 contribute to the ATP site.

It belongs to the chaperonin (HSP60) family. Forms a cylinder of 14 subunits composed of two heptameric rings stacked back-to-back. Interacts with the co-chaperonin GroES.

It localises to the cytoplasm. The catalysed reaction is ATP + H2O + a folded polypeptide = ADP + phosphate + an unfolded polypeptide.. Together with its co-chaperonin GroES, plays an essential role in assisting protein folding. The GroEL-GroES system forms a nano-cage that allows encapsulation of the non-native substrate proteins and provides a physical environment optimized to promote and accelerate protein folding. The sequence is that of Chaperonin GroEL from Leptothrix cholodnii (strain ATCC 51168 / LMG 8142 / SP-6) (Leptothrix discophora (strain SP-6)).